A 338-amino-acid chain; its full sequence is Dehydrogenase/reductase SDR family member 7 (338 aa).

A signal peptide spans 1–28; it reads MSWELLLWLLALCALILPLVQLLRFLRA. 2 residues coordinate NAD(+): Ser-60 and Ile-62. Ser-190 lines the substrate pocket. NAD(+) contacts are provided by Tyr-203, Lys-207, and Ser-239. The active-site Proton acceptor is the Tyr-203.

Belongs to the short-chain dehydrogenases/reductases (SDR) family.

The protein localises to the endoplasmic reticulum membrane. It catalyses the reaction all-trans-retinol + NADP(+) = all-trans-retinal + NADPH + H(+). It carries out the reaction 5alpha-androstane-3alpha,17beta-diol + NADP(+) = 17beta-hydroxy-5alpha-androstan-3-one + NADPH + H(+). Functionally, NADPH-dependent oxidoreductase which catalyzes the reduction of a variety of compounds bearing carbonyl groups including steroids, retinoids and xenobiotics. Catalyzes the reduction/inactivation of 5alpha-dihydrotestosterone to 3alpha-androstanediol, with a possible role in the modulation of androgen receptor function. Involved in the reduction of all-trans-retinal to all-trans-retinol. Converts cortisone to 20beta-dihydrocortisone in vitro, although the physiological relevance of this activity is questionable. Reduces exogenous compounds such as quinones (1,2-naphtoquinone, 9,10-phenantrenequinone and benzoquinone) and other xenobiotics (alpha-diketones) in vitro, suggesting a role in the biotransformation of xenobiotics with carbonyl group. A dehydrogenase activity has not been detected so far. May play a role as tumor suppressor. The polypeptide is Dehydrogenase/reductase SDR family member 7 (Mus musculus (Mouse)).